We begin with the raw amino-acid sequence, 500 residues long: Glucosylglycerol-phosphate synthase (500 aa).

Belongs to the glycosyltransferase 20 family.

It carries out the reaction ADP-alpha-D-glucose + sn-glycerol 3-phosphate = 2-O-(alpha-D-glucopyranosyl)-sn-glycerol 3-phosphate + ADP + H(+). It functions in the pathway glycan metabolism; glucosylglycerol biosynthesis. Functionally, involved in salt tolerance by producing GG-phosphate from ADP-glucose and glycerol-3-phosphate (G3P), an intermediate in the synthesis of the osmolyte glucosylglycerol (GG). The chain is Glucosylglycerol-phosphate synthase (ggpS) from Picosynechococcus sp. (strain ATCC 27264 / PCC 7002 / PR-6) (Agmenellum quadruplicatum).